The following is a 228-amino-acid chain: Aquaporin Z (228 aa).

The next 5 membrane-spanning stretches (helical) occupy residues 1–21 (MLNK…GGCG), 46–66 (TVLT…NPAV), 82–102 (IPYW…LYVI), 129–149 (MMAG…IILG), and 154–174 (LAPA…IHLV). The NPA 1 motif lies at 63 to 65 (NPA). An NPA 2 motif is present at residues 184-186 (NPA). A helical transmembrane segment spans residues 205–225 (LFWVAPLVGAVIGAIIWKGLL).

Belongs to the MIP/aquaporin (TC 1.A.8) family. As to quaternary structure, homotetramer.

The protein resides in the cell inner membrane. The catalysed reaction is H2O(in) = H2O(out). Channel that permits osmotically driven movement of water in both directions. It is involved in the osmoregulation and in the maintenance of cell turgor during volume expansion in rapidly growing cells. It mediates rapid entry or exit of water in response to abrupt changes in osmolarity. This Brucella suis biovar 1 (strain 1330) protein is Aquaporin Z.